The chain runs to 629 residues: Ionotropic receptor 75a (629 aa).

Residues M1–P335 are Extracellular-facing. N61, N112, N126, N144, N166, and N232 each carry an N-linked (GlcNAc...) asparagine glycan. Residues L336–F356 form a helical membrane-spanning segment. Residues Y357 to S374 lie on the Cytoplasmic side of the membrane. Residues L375 to P395 form a helical membrane-spanning segment. Over R396 to L402 the chain is Extracellular. The helical transmembrane segment at I403 to V423 threads the bilayer. Residues S424–Y592 lie on the Cytoplasmic side of the membrane. A helical transmembrane segment spans residues V593–V613. Residues E614–P629 lie on the Extracellular side of the membrane.

It belongs to the glutamate-gated ion channel (TC 1.A.10.1) family. In terms of tissue distribution, expressed in acetic-acid-sensing neurons in the antennal coeloconic 2 (ac2) and antennal coeloconic 3 (ac3) sensilla class of sensory hairs (at protein level).

Its subcellular location is the cell membrane. It localises to the cell projection. It is found in the dendrite. In terms of biological role, odorant receptor for acetic and propionic acid. Functions as part of an olfactory receptor complex including the ionotropic receptor coreceptor Ir8a. This chain is Ionotropic receptor 75a, found in Drosophila melanogaster (Fruit fly).